Reading from the N-terminus, the 166-residue chain is NAD(P)H-quinone oxidoreductase subunit I, chloroplastic (166 aa).

2 consecutive 4Fe-4S ferredoxin-type domains span residues 55–84 and 95–124; these read GRIH…VDWK and LNYS…MTEE. Positions 64, 67, 70, 74, 104, 107, 110, and 114 each coordinate [4Fe-4S] cluster.

Belongs to the complex I 23 kDa subunit family. As to quaternary structure, NDH is composed of at least 16 different subunits, 5 of which are encoded in the nucleus. The cofactor is [4Fe-4S] cluster.

It localises to the plastid. It is found in the chloroplast thylakoid membrane. The catalysed reaction is a plastoquinone + NADH + (n+1) H(+)(in) = a plastoquinol + NAD(+) + n H(+)(out). It carries out the reaction a plastoquinone + NADPH + (n+1) H(+)(in) = a plastoquinol + NADP(+) + n H(+)(out). NDH shuttles electrons from NAD(P)H:plastoquinone, via FMN and iron-sulfur (Fe-S) centers, to quinones in the photosynthetic chain and possibly in a chloroplast respiratory chain. The immediate electron acceptor for the enzyme in this species is believed to be plastoquinone. Couples the redox reaction to proton translocation, and thus conserves the redox energy in a proton gradient. The chain is NAD(P)H-quinone oxidoreductase subunit I, chloroplastic from Silphium perfoliatum (Cup plant).